The primary structure comprises 62 residues: Sperm protamine P1 (62 aa).

The disordered stretch occupies residues 1-62 (MARYRHSRSR…RYSRRRRRRY (62 aa)).

This sequence belongs to the protamine P1 family. Testis.

The protein resides in the nucleus. Its subcellular location is the chromosome. Functionally, protamines substitute for histones in the chromatin of sperm during the haploid phase of spermatogenesis. They compact sperm DNA into a highly condensed, stable and inactive complex. This chain is Sperm protamine P1 (PRM1), found in Bettongia penicillata (Brush-tailed bettong).